The primary structure comprises 417 residues: MFSRDLTLARFDADLFAAMQQEAKRQEDHIELIASENYTSPAVMEAQGSVLTNKYAEGYPGKRYYGGCEYVDVVEQLAIDRAKELFGADYANVQPHAGSQANAAVYLALLSAGDTILGMSLAHGGHLTHGASVSSSGKLYNAVQYGINDQGLIDYDEVERLAVEHKPKMIVAGFSAYSQKLDFARFREIADKVGAYLFVDMAHVAGLVAAGVYPNPVPFADVVTTTTHKTLRGPRGGLILAKKNEEIEKKLNSAVFPGAQGGPLEHVIAAKAVCFKEALQPEFKAYQQQVVKNAQAMAEVFIQRGFDVVSGGTQNHLFLLSLIKQDITGKDADAALGRAHITVNKNSVPNDPRSPFVTSGLRIGTPAVTTRGFGEAECRELAGWICDILDNMGDESVIDAVRGKVEAVCAKFPVYGN.

Residues Leu-121 and 125 to 127 contribute to the (6S)-5,6,7,8-tetrahydrofolate site; that span reads GHL. Residue Lys-229 is modified to N6-(pyridoxal phosphate)lysine. 354 to 356 serves as a coordination point for (6S)-5,6,7,8-tetrahydrofolate; that stretch reads SPF.

The protein belongs to the SHMT family. As to quaternary structure, homodimer. Requires pyridoxal 5'-phosphate as cofactor.

It is found in the cytoplasm. It carries out the reaction (6R)-5,10-methylene-5,6,7,8-tetrahydrofolate + glycine + H2O = (6S)-5,6,7,8-tetrahydrofolate + L-serine. The protein operates within one-carbon metabolism; tetrahydrofolate interconversion. It participates in amino-acid biosynthesis; glycine biosynthesis; glycine from L-serine: step 1/1. Functionally, catalyzes the reversible interconversion of serine and glycine with tetrahydrofolate (THF) serving as the one-carbon carrier. This reaction serves as the major source of one-carbon groups required for the biosynthesis of purines, thymidylate, methionine, and other important biomolecules. Also exhibits THF-independent aldolase activity toward beta-hydroxyamino acids, producing glycine and aldehydes, via a retro-aldol mechanism. The protein is Serine hydroxymethyltransferase of Stutzerimonas stutzeri (strain A1501) (Pseudomonas stutzeri).